The sequence spans 217 residues: Protein DJ-1alpha (217 aa).

Cys-133 serves as the catalytic Nucleophile. Cysteine sulfinic acid (-SO2H); alternate is present on Cys-133.

In terms of tissue distribution, expressed in testis (at protein level).

The protein resides in the cytoplasm. It localises to the nucleus. It is found in the mitochondrion. Plays an important role in cell protection against oxidative stress and cell death acting as oxidative stress sensor. Does not play a role in methylglyoxal detoxification. This Drosophila melanogaster (Fruit fly) protein is Protein DJ-1alpha.